A 243-amino-acid polypeptide reads, in one-letter code: Urease accessory protein UreF (243 aa).

Belongs to the UreF family. UreD, UreF and UreG form a complex that acts as a GTP-hydrolysis-dependent molecular chaperone, activating the urease apoprotein by helping to assemble the nickel containing metallocenter of UreC. The UreE protein probably delivers the nickel.

It is found in the cytoplasm. Functionally, required for maturation of urease via the functional incorporation of the urease nickel metallocenter. The polypeptide is Urease accessory protein UreF (Xanthobacter autotrophicus (strain ATCC BAA-1158 / Py2)).